The sequence spans 168 residues: S-ribosylhomocysteine lyase (168 aa).

Fe cation contacts are provided by histidine 54, histidine 58, and cysteine 128.

It belongs to the LuxS family. Homodimer. Fe cation is required as a cofactor.

The enzyme catalyses S-(5-deoxy-D-ribos-5-yl)-L-homocysteine = (S)-4,5-dihydroxypentane-2,3-dione + L-homocysteine. In terms of biological role, involved in the synthesis of autoinducer 2 (AI-2) which is secreted by bacteria and is used to communicate both the cell density and the metabolic potential of the environment. The regulation of gene expression in response to changes in cell density is called quorum sensing. Catalyzes the transformation of S-ribosylhomocysteine (RHC) to homocysteine (HC) and 4,5-dihydroxy-2,3-pentadione (DPD). The polypeptide is S-ribosylhomocysteine lyase (Histophilus somni (strain 129Pt) (Haemophilus somnus)).